We begin with the raw amino-acid sequence, 246 residues long: Probable aquaporin AqpM (246 aa).

Over 1 to 12 (MTMTLAKRFTAE) the chain is Cytoplasmic. A helical transmembrane segment spans residues 13-33 (VVGTFILVFFGPGAAVITLMI). Over 34 to 56 (ANGADKPNEFNIGIGALGGLGDW) the chain is Extracellular. Residues 57-77 (FAIGMAFALAIAAVIYSLGRI) traverse the membrane as a helical segment. The Cytoplasmic portion of the chain corresponds to 78-104 (SGAHINPAVTIALWSIGRFPGREVVPY). An NPA 1 motif is present at residues 83 to 85 (NPA). A helical transmembrane segment spans residues 105 to 125 (IVAQFIGAALGSLLFLACVGP). The Extracellular portion of the chain corresponds to 126-146 (AAATVGGLGATAPFPGIGYGQ). The helical transmembrane segment at 147–167 (AILTEAIGTFLLMLVIMGVAV) threads the bilayer. The Cytoplasmic segment spans residues 168–173 (DERAPP). A helical membrane pass occupies residues 174 to 194 (GFAGLVIGLTVGGIITTIGNI). Over 195–217 (TGSSLNPARTFGPYLGDSLMGIN) the chain is Extracellular. The NPA 2 signature appears at 200–202 (NPA). A helical transmembrane segment spans residues 218–238 (LWQYFPIYVIGPIVGAVAAAW). Over 239–246 (LYNYLAKE) the chain is Cytoplasmic.

Belongs to the MIP/aquaporin (TC 1.A.8) family.

It is found in the cell membrane. Functionally, channel that permits osmotically driven movement of water in both directions. The protein is Probable aquaporin AqpM (aqpM) of Archaeoglobus fulgidus (strain ATCC 49558 / DSM 4304 / JCM 9628 / NBRC 100126 / VC-16).